The following is a 119-amino-acid chain: uncharacterized protein (119 aa).

The first 23 residues, 1 to 23 (MVKWAVSILVNALLLIVIDGYID), serve as a signal peptide directing secretion. 3 helical membrane-spanning segments follow: residues 27–47 (ISSI…NVLI), 50–70 (LLII…LFVI), and 88–108 (IDGF…HLLI).

Its subcellular location is the cell membrane. This is an uncharacterized protein from Bacillus subtilis (strain 168).